An 84-amino-acid polypeptide reads, in one-letter code: Small ribosomal subunit protein bS16 (84 aa).

This sequence belongs to the bacterial ribosomal protein bS16 family.

The protein is Small ribosomal subunit protein bS16 of Methylococcus capsulatus (strain ATCC 33009 / NCIMB 11132 / Bath).